A 395-amino-acid polypeptide reads, in one-letter code: Cytochrome b561 and DOMON domain-containing protein At5g47530 (395 aa).

The signal sequence occupies residues 1–24 (MAISSNLLLCLSLFIFIITKSALA). A DOMON domain is found at 47–162 (LDSFLHYTYD…GIINTVWQDG (116 aa)). One can recognise a Cytochrome b561 domain in the interval 176–371 (GNNVRSVSTL…LEGFTWYVVI (196 aa)). Helical transmembrane passes span 210–230 (IHGILNGVSWGIMMPIGAIIA) and 242–262 (AWFYLHVFCQSSAYIIGVAGW). 3 residues coordinate heme b: His-211, His-247, and His-280. The helical transmembrane segment at 282 to 302 (AVGIALFCLATIQVFAMFLRP) threads the bilayer. His-316 lines the heme b pocket. 2 helical membrane-spanning segments follow: residues 318 to 338 (TVGYSVIILAVVNVFKGLDIL) and 351 to 371 (IIVVLGIVAVVLEGFTWYVVI).

Requires heme b as cofactor.

It localises to the membrane. Its function is as follows. May act as a catecholamine-responsive trans-membrane electron transporter. This chain is Cytochrome b561 and DOMON domain-containing protein At5g47530, found in Arabidopsis thaliana (Mouse-ear cress).